A 1369-amino-acid chain; its full sequence is Phospholipase D1 (1369 aa).

Disordered regions lie at residues 27–90 (YSEK…SSWH) and 318–340 (ESHS…GRKK). Residues 31 to 53 (GTGRKDAEDHTPSKITDLEKNVD) are compositionally biased toward basic and acidic residues. One can recognise a PX domain in the interval 208–379 (TDLIKVSVLD…NVLYSFLEFS (172 aa)). PLD phosphodiesterase domains are found at residues 641-668 (LFWA…CFGR) and 941-968 (EMIY…NERS). The span at 1277–1289 (HETHEKSENDPKN) shows a compositional bias: basic and acidic residues. Positions 1277-1320 (HETHEKSENDPKNPKAGSQGSGNTSASEDSKTEKPKTRTNNGLQ) are disordered. Polar residues predominate over residues 1292–1303 (AGSQGSGNTSAS).

Belongs to the phospholipase D family.

The protein localises to the cytoplasm. The catalysed reaction is a 1,2-diacyl-sn-glycero-3-phosphocholine + H2O = a 1,2-diacyl-sn-glycero-3-phosphate + choline + H(+). With respect to regulation, activity is slightly stimulated by oleate. Its function is as follows. Required for meiosis and spore formation. Seems to be involved in the coordinate induction of late meiotic events. This is Phospholipase D1 (pld1) from Schizosaccharomyces pombe (strain 972 / ATCC 24843) (Fission yeast).